The sequence spans 335 residues: 3-hydroxyproline 2-epimerase (335 aa).

The active-site Proton acceptor is Cys-91. Substrate contacts are provided by residues Gly-92–His-93, Asp-251, and Gly-256–Ser-257.

The protein belongs to the proline racemase family.

It carries out the reaction trans-3-hydroxy-L-proline = cis-3-hydroxy-D-proline. The enzyme catalyses trans-4-hydroxy-L-proline = cis-4-hydroxy-D-proline. Catalyzes the epimerization of trans-3-hydroxy-L-proline (t3LHyp) to cis-3-hydroxy-D-proline (c3DHyp) in vitro. Can also catalyze the epimerization of trans-4-hydroxy-L-proline (t3LHyp) to cis-4-hydroxy-D-proline (c4DHyp), albeit with 3.6-fold lower efficiency. Displays no proline racemase activity. This is 3-hydroxyproline 2-epimerase from Burkholderia multivorans (strain ATCC 17616 / 249).